Reading from the N-terminus, the 252-residue chain is Membrane protein insertase YidC (252 aa).

A signal peptide spans 1 to 19; it reads MKKVLWIIIIILMVGALAG. The N-palmitoyl cysteine moiety is linked to residue Cys20. A lipid anchor (S-diacylglycerol cysteine) is attached at Cys20. Helical transmembrane passes span 34-54, 58-78, 131-151, 162-182, 201-221, and 223-243; these read IWNH…ADLL, FGLS…PLMI, MAGC…YFAI, FLWF…VAGI, VIIY…PSAL, and LYWV…VVRF.

It belongs to the OXA1/ALB3/YidC family. Type 2 subfamily.

It localises to the cell membrane. In terms of biological role, required for the insertion and/or proper folding and/or complex formation of integral membrane proteins into the membrane. Involved in integration of membrane proteins that insert both dependently and independently of the Sec translocase complex, as well as at least some lipoproteins. This chain is Membrane protein insertase YidC, found in Alkalihalophilus pseudofirmus (strain ATCC BAA-2126 / JCM 17055 / OF4) (Bacillus pseudofirmus).